We begin with the raw amino-acid sequence, 206 residues long: BAG family molecular chaperone regulator 1B (206 aa).

One can recognise a BAG domain in the interval 122–202 (IEAYIDELQQ…QYLSKLDSTK (81 aa)). Serine 144 carries the post-translational modification Phosphoserine.

Binds to the ATPase domain of HSP70/HSC chaperones.

Functionally, inhibits the chaperone activity of HSP70/HSC70 by promoting substrate release. This is BAG family molecular chaperone regulator 1B (bag102) from Schizosaccharomyces pombe (strain 972 / ATCC 24843) (Fission yeast).